A 77-amino-acid polypeptide reads, in one-letter code: Acyl carrier protein (77 aa).

The Carrier domain maps to 2 to 77 (SSIDKRIKEI…DAIDYITDHT (76 aa)). An O-(pantetheine 4'-phosphoryl)serine modification is found at Ser-37.

Belongs to the acyl carrier protein (ACP) family. 4'-phosphopantetheine is transferred from CoA to a specific serine of apo-ACP by AcpS. This modification is essential for activity because fatty acids are bound in thioester linkage to the sulfhydryl of the prosthetic group.

The protein localises to the cytoplasm. It functions in the pathway lipid metabolism; fatty acid biosynthesis. In terms of biological role, carrier of the growing fatty acid chain in fatty acid biosynthesis. The protein is Acyl carrier protein of Geotalea daltonii (strain DSM 22248 / JCM 15807 / FRC-32) (Geobacter daltonii).